Reading from the N-terminus, the 274-residue chain is tRNA-cytidine(32) 2-sulfurtransferase (274 aa).

Positions 40 to 45 (SGGKDS) match the PP-loop motif motif. Residues Cys-115, Cys-118, and Cys-206 each coordinate [4Fe-4S] cluster.

The protein belongs to the TtcA family. In terms of assembly, homodimer. The cofactor is Mg(2+). It depends on [4Fe-4S] cluster as a cofactor.

The protein localises to the cytoplasm. It carries out the reaction cytidine(32) in tRNA + S-sulfanyl-L-cysteinyl-[cysteine desulfurase] + AH2 + ATP = 2-thiocytidine(32) in tRNA + L-cysteinyl-[cysteine desulfurase] + A + AMP + diphosphate + H(+). It functions in the pathway tRNA modification. In terms of biological role, catalyzes the ATP-dependent 2-thiolation of cytidine in position 32 of tRNA, to form 2-thiocytidine (s(2)C32). The sulfur atoms are provided by the cysteine/cysteine desulfurase (IscS) system. This is tRNA-cytidine(32) 2-sulfurtransferase from Azotobacter vinelandii (strain DJ / ATCC BAA-1303).